We begin with the raw amino-acid sequence, 462 residues long: Argininosuccinate lyase (462 aa).

The protein belongs to the lyase 1 family. Argininosuccinate lyase subfamily.

The protein resides in the cytoplasm. The catalysed reaction is 2-(N(omega)-L-arginino)succinate = fumarate + L-arginine. Its pathway is amino-acid biosynthesis; L-arginine biosynthesis; L-arginine from L-ornithine and carbamoyl phosphate: step 3/3. The sequence is that of Argininosuccinate lyase from Exiguobacterium sp. (strain ATCC BAA-1283 / AT1b).